The chain runs to 423 residues: MPGCPCPGIGMAGQRLLFLAALALELLGGAGGSQQALRSRGVAAACRLDSKESESWGALLSGERLETWICSLLGSLMVGLSGVFPLLVIPLEMGTTLRSEAGARRLKQLLSFALGGLLGNVFLHLLPEAWAYTNSASSGGERQSLQQQQQLGLWVIAGFLTFLVLEKLFFDSKGKEETSQAPSKDPAAAAALNGGHYLAQPAAEPGPSAVVRNIKVSGYLNLLANTIDNFTHGLAVAASFLVSKKIGLLTTMAILLHEIPHEVGDFAILLRAGFDRWSAAKLQLSTALGGLLGACFAICAQSPKGVGTGVGVVAVRRGALAEGHGRPDPGIRARLCSGPPRGMGGGRYTWPPSPPQPVRAPPPATEETVAWILPFTSGGFLYIALVNVLPDLLEEDDPWRSLQQVLLLCAGIVVMVLFSVFVE.

Over 1–15 the chain is Lumenal; it reads MPGCPCPGIGMAGQR. A helical transmembrane segment spans residues 16-36; it reads LLFLAALALELLGGAGGSQQA. Topologically, residues 37-68 are cytoplasmic; sequence LRSRGVAAACRLDSKESESWGALLSGERLETW. Residues 69–89 form a helical membrane-spanning segment; sequence ICSLLGSLMVGLSGVFPLLVI. The Lumenal portion of the chain corresponds to 90–108; that stretch reads PLEMGTTLRSEAGARRLKQ. Residues 109–129 form a helical membrane-spanning segment; it reads LLSFALGGLLGNVFLHLLPEA. At 130–149 the chain is on the cytoplasmic side; it reads WAYTNSASSGGERQSLQQQQ. Residues 150 to 170 form a helical membrane-spanning segment; sequence QLGLWVIAGFLTFLVLEKLFF. The Lumenal segment spans residues 171–235; that stretch reads DSKGKEETSQ…TIDNFTHGLA (65 aa). The chain crosses the membrane as a helical span at residues 236–256; the sequence is VAASFLVSKKIGLLTTMAILL. The short motif at 257–262 is the XEXPHE-motif element; the sequence is HEIPHE. At 257 to 278 the chain is on the cytoplasmic side; the sequence is HEIPHEVGDFAILLRAGFDRWS. A helical transmembrane segment spans residues 279–299; the sequence is AAKLQLSTALGGLLGACFAIC. At 300-368 the chain is on the lumenal side; that stretch reads AQSPKGVGTG…RAPPPATEET (69 aa). The helical transmembrane segment at 369 to 389 threads the bilayer; the sequence is VAWILPFTSGGFLYIALVNVL. Residues 390 to 401 lie on the Cytoplasmic side of the membrane; sequence PDLLEEDDPWRS. A helical membrane pass occupies residues 402–422; it reads LQQVLLLCAGIVVMVLFSVFV. E423 is a topological domain (lumenal).

Belongs to the ZIP transporter (TC 2.A.5) family. In terms of assembly, homodimer.

It is found in the golgi apparatus membrane. The protein resides in the cytoplasmic vesicle membrane. Its subcellular location is the endoplasmic reticulum membrane. It carries out the reaction Zn(2+)(in) = Zn(2+)(out). In terms of biological role, functions as a zinc transporter transporting Zn(2+) from the Golgi apparatus to the cytosol and thus influences the zinc level at least in areas of the cytosol. May regulate beige adipocyte differentiation. This Bos taurus (Bovine) protein is Zinc transporter ZIP13.